We begin with the raw amino-acid sequence, 149 residues long: Transcriptional repressor NrdR (149 aa).

A zinc finger lies at 3 to 34 (CPFCSAVDTKVIDSRLVGEGSQVRRRRQCLVC). Positions 49–139 (PRVIKSNEVR…VYRSFEDIRE (91 aa)) constitute an ATP-cone domain.

The protein belongs to the NrdR family. The cofactor is Zn(2+).

Its function is as follows. Negatively regulates transcription of bacterial ribonucleotide reductase nrd genes and operons by binding to NrdR-boxes. The polypeptide is Transcriptional repressor NrdR (Pectobacterium carotovorum subsp. carotovorum (strain PC1)).